A 149-amino-acid chain; its full sequence is Small ribosomal subunit protein uS9 (149 aa).

This sequence belongs to the universal ribosomal protein uS9 family.

Its subcellular location is the cytoplasm. In Oryza sativa subsp. indica (Rice), this protein is Small ribosomal subunit protein uS9 (RPS16A).